A 24-amino-acid chain; its full sequence is U1-plectoxin-Pt1e (24 aa).

Cys4 and Cys18 are disulfide-bonded.

Belongs to the neurotoxin 02 (plectoxin) family. 02 (plectoxin) subfamily. Post-translationally, contains 5 disulfide bonds. Expressed by the venom gland.

It localises to the secreted. Potent toxin that may paralyze and/or kill insect pests such as H.virescens (lepidoptera), S.exigua (beet armyworm) and M.sexta (tobacco hornworm). The protein is U1-plectoxin-Pt1e of Plectreurys tristis (Spider).